Consider the following 448-residue polypeptide: tRNA modification GTPase MnmE (448 aa).

The (6S)-5-formyl-5,6,7,8-tetrahydrofolate site is built by Arg22, Glu83, and Arg122. Residues 219 to 369 (GVKTVIVGRP…LESEILKTLK (151 aa)) enclose the TrmE-type G domain. Position 229 (Asn229) interacts with K(+). Residues 229–234 (NVGKSS), 248–254 (SDIAGTT), and 273–276 (DTAG) each bind GTP. Position 233 (Ser233) interacts with Mg(2+). Residues Ser248, Ile250, and Thr253 each contribute to the K(+) site. Thr254 contacts Mg(2+). Position 448 (Lys448) interacts with (6S)-5-formyl-5,6,7,8-tetrahydrofolate.

It belongs to the TRAFAC class TrmE-Era-EngA-EngB-Septin-like GTPase superfamily. TrmE GTPase family. In terms of assembly, homodimer. Heterotetramer of two MnmE and two MnmG subunits. It depends on K(+) as a cofactor.

Its subcellular location is the cytoplasm. Its function is as follows. Exhibits a very high intrinsic GTPase hydrolysis rate. Involved in the addition of a carboxymethylaminomethyl (cmnm) group at the wobble position (U34) of certain tRNAs, forming tRNA-cmnm(5)s(2)U34. This Acholeplasma laidlawii (strain PG-8A) protein is tRNA modification GTPase MnmE.